We begin with the raw amino-acid sequence, 24 residues long: Neurotoxin-2 (24 aa).

One can recognise an LCN-type CS-alpha/beta domain in the interval Glu-1–Asp-24.

The protein belongs to the long (4 C-C) scorpion toxin superfamily. Sodium channel inhibitor family. Alpha subfamily. In terms of tissue distribution, expressed by the venom gland.

The protein resides in the secreted. In terms of biological role, binds to sodium channels (Nav) and inhibits the inactivation of the activated channels, thereby blocking neuronal transmission. This toxin is active against mammals. The protein is Neurotoxin-2 of Hottentotta tamulus (Eastern Indian scorpion).